Consider the following 762-residue polypeptide: Primary amine oxidase, liver isozyme (762 aa).

Residues M1 to G16 form the signal peptide. Residues G23–D54 are disordered. N136 carries N-linked (GlcNAc...) asparagine glycosylation. The cysteines at positions 197 and 198 are disulfide-linked. N-linked (GlcNAc...) asparagine glycosylation occurs at N231. Position 383-393 (Y383–F393) interacts with substrate. D385 serves as the catalytic Proton acceptor. A disulfide bridge links C403 with C429. A substrate-binding site is contributed by M467 to Y472. Y470 acts as the Schiff-base intermediate with substrate; via topaquinone in catalysis. Residue Y470 is modified to 2',4',5'-topaquinone. 2 residues coordinate Cu cation: H519 and H521. Ca(2+)-binding residues include D528, L529, D530, E571, F662, and N664. N665 carries N-linked (GlcNAc...) asparagine glycosylation. The Ca(2+) site is built by E666, D672, and L673. H683 serves as a coordination point for Cu cation. A disulfide bridge connects residues C733 and C740.

The protein belongs to the copper/topaquinone oxidase family. In terms of assembly, homodimer; disulfide-linked. It depends on Cu cation as a cofactor. Ca(2+) is required as a cofactor. The cofactor is L-topaquinone. Topaquinone (TPQ) is generated by copper-dependent autoxidation of a specific tyrosyl residue. Liver.

The protein resides in the secreted. It is found in the extracellular space. The catalysed reaction is a primary methyl amine + O2 + H2O = an aldehyde + H2O2 + NH4(+). This Bos taurus (Bovine) protein is Primary amine oxidase, liver isozyme.